Here is a 96-residue protein sequence, read N- to C-terminus: Co-chaperonin GroES (96 aa).

This sequence belongs to the GroES chaperonin family. Heptamer of 7 subunits arranged in a ring. Interacts with the chaperonin GroEL.

It localises to the cytoplasm. Its function is as follows. Together with the chaperonin GroEL, plays an essential role in assisting protein folding. The GroEL-GroES system forms a nano-cage that allows encapsulation of the non-native substrate proteins and provides a physical environment optimized to promote and accelerate protein folding. GroES binds to the apical surface of the GroEL ring, thereby capping the opening of the GroEL channel. The polypeptide is Co-chaperonin GroES (Pelagibacter ubique (strain HTCC1062)).